The following is a 180-amino-acid chain: Large ribosomal subunit protein uL10 (180 aa).

The interval 161–180 (SKAEGSEETESNETTETVEE) is disordered. The span at 166-180 (SEETESNETTETVEE) shows a compositional bias: acidic residues.

It belongs to the universal ribosomal protein uL10 family. In terms of assembly, part of the ribosomal stalk of the 50S ribosomal subunit. The N-terminus interacts with L11 and the large rRNA to form the base of the stalk. The C-terminus forms an elongated spine to which L12 dimers bind in a sequential fashion forming a multimeric L10(L12)X complex.

Forms part of the ribosomal stalk, playing a central role in the interaction of the ribosome with GTP-bound translation factors. The chain is Large ribosomal subunit protein uL10 from Finegoldia magna (strain ATCC 29328 / DSM 20472 / WAL 2508) (Peptostreptococcus magnus).